The primary structure comprises 139 residues: Translation initiation factor 2 subunit beta (139 aa).

This sequence belongs to the eIF-2-beta/eIF-5 family. Heterotrimer composed of an alpha, a beta and a gamma chain.

Functionally, eIF-2 functions in the early steps of protein synthesis by forming a ternary complex with GTP and initiator tRNA. The polypeptide is Translation initiation factor 2 subunit beta (Saccharolobus solfataricus (strain ATCC 35092 / DSM 1617 / JCM 11322 / P2) (Sulfolobus solfataricus)).